The following is a 141-amino-acid chain: Hemoglobin subunit alpha-A (141 aa).

Residues 1–141 (VLSPADKSNV…VGTVLTAKYR (141 aa)) enclose the Globin domain. Position 58 (histidine 58) interacts with O2. A heme b-binding site is contributed by histidine 87.

Belongs to the globin family. As to quaternary structure, heterotetramer of two alpha chains and two beta chains. In terms of tissue distribution, red blood cells.

In terms of biological role, involved in oxygen transport from the lung to the various peripheral tissues. The protein is Hemoglobin subunit alpha-A (HBAA) of Passer montanus (Eurasian tree sparrow).